The following is a 261-amino-acid chain: Single-strand annealing weakened protein 1 (261 aa).

As to quaternary structure, interacts with MSH2, MSH3, RAD1, RAD10, RAD51 and RAD52.

The protein resides in the nucleus. Catalyzes 3'-non-homologous tail removal of RAD1/RAD10-dependent single-strand annealing recombination intermediates. Plays a key role in targeting RAD1/RAD10 complex to 3'-flap cleavage substrate in recombination. Also contributes to the integrity of ribosomal DNA arrays. The sequence is that of Single-strand annealing weakened protein 1 (SAW1) from Saccharomyces cerevisiae (strain ATCC 204508 / S288c) (Baker's yeast).